Reading from the N-terminus, the 170-residue chain is Adenine phosphoribosyltransferase (170 aa).

This sequence belongs to the purine/pyrimidine phosphoribosyltransferase family. As to quaternary structure, homodimer.

It is found in the cytoplasm. It carries out the reaction AMP + diphosphate = 5-phospho-alpha-D-ribose 1-diphosphate + adenine. It functions in the pathway purine metabolism; AMP biosynthesis via salvage pathway; AMP from adenine: step 1/1. In terms of biological role, catalyzes a salvage reaction resulting in the formation of AMP, that is energically less costly than de novo synthesis. The polypeptide is Adenine phosphoribosyltransferase (Bacillus licheniformis (strain ATCC 14580 / DSM 13 / JCM 2505 / CCUG 7422 / NBRC 12200 / NCIMB 9375 / NCTC 10341 / NRRL NRS-1264 / Gibson 46)).